We begin with the raw amino-acid sequence, 445 residues long: Trigger factor (445 aa).

The PPIase FKBP-type domain occupies 162–247; that stretch reads GDQVTIDAIG…IKAVHTAEPT (86 aa).

It belongs to the FKBP-type PPIase family. Tig subfamily.

It is found in the cytoplasm. The catalysed reaction is [protein]-peptidylproline (omega=180) = [protein]-peptidylproline (omega=0). Functionally, involved in protein export. Acts as a chaperone by maintaining the newly synthesized protein in an open conformation. Functions as a peptidyl-prolyl cis-trans isomerase. This chain is Trigger factor, found in Rickettsia peacockii (strain Rustic).